Reading from the N-terminus, the 455-residue chain is F-box/LRR-repeat protein At5g35995 (455 aa).

The 48-residue stretch at 4 to 51 folds into the F-box domain; the sequence is RDFISSLPDEVLGKKILSLLPTKLVVSTSVLSKRWRNLFHFVDSFDLE. LRR repeat units follow at residues 114–138, 152–176, 282–305, 308–324, and 325–348; these read DHYL…SYRT, FPAL…LISG, IRNV…CYTM, FDKL…ENGW, and QALP…LLHK.

This chain is F-box/LRR-repeat protein At5g35995, found in Arabidopsis thaliana (Mouse-ear cress).